The following is a 304-amino-acid chain: Acetyl-coenzyme A carboxylase carboxyl transferase subunit beta (304 aa).

One can recognise a CoA carboxyltransferase N-terminal domain in the interval 23–292; it reads VWTKCDSCGQ…PNPDAPREGV (270 aa). Zn(2+) contacts are provided by Cys27, Cys30, Cys46, and Cys49. A C4-type zinc finger spans residues 27-49; it reads CDSCGQVLYRAELERNLEVCPKC. Residues 284–304 form a disordered region; it reads NPDAPREGVVVPPAPDQESEV.

Belongs to the AccD/PCCB family. As to quaternary structure, acetyl-CoA carboxylase is a heterohexamer composed of biotin carboxyl carrier protein (AccB), biotin carboxylase (AccC) and two subunits each of ACCase subunit alpha (AccA) and ACCase subunit beta (AccD). It depends on Zn(2+) as a cofactor.

The protein localises to the cytoplasm. The catalysed reaction is N(6)-carboxybiotinyl-L-lysyl-[protein] + acetyl-CoA = N(6)-biotinyl-L-lysyl-[protein] + malonyl-CoA. It functions in the pathway lipid metabolism; malonyl-CoA biosynthesis; malonyl-CoA from acetyl-CoA: step 1/1. In terms of biological role, component of the acetyl coenzyme A carboxylase (ACC) complex. Biotin carboxylase (BC) catalyzes the carboxylation of biotin on its carrier protein (BCCP) and then the CO(2) group is transferred by the transcarboxylase to acetyl-CoA to form malonyl-CoA. The sequence is that of Acetyl-coenzyme A carboxylase carboxyl transferase subunit beta from Salmonella paratyphi A (strain ATCC 9150 / SARB42).